A 427-amino-acid chain; its full sequence is Intermediate conductance calcium-activated potassium channel protein 4 (427 aa).

Residues 29-49 traverse the membrane as a helical segment; it reads ALVLAGTGIGLMVLHAEMLWF. A helical transmembrane segment spans residues 59-79; sequence FLVKCTISISTFLLLCLIVAF. Residues 108–128 traverse the membrane as a helical segment; it reads IVLELVVCGLHPAPVRGPPCV. The helical transmembrane segment at 143–163 threads the bilayer; sequence GFLGQGEALLSLAMLLRLYLV. A helical transmembrane segment spans residues 207–227; sequence LLLGLTLGLWLTTAWVLSVAE. Residues 241-261 constitute an intramembrane region (pore-forming); that stretch reads LWLIPITFLTIGYGDVVPGTM. A helical membrane pass occupies residues 265–285; the sequence is IVCLCTGVMGVCCTALLVAVV. Residues 286-347 are calmodulin-binding; the sequence is ARKLEFNKAE…RRHQRKLLAA (62 aa). His-358 is subject to Phosphohistidine.

Belongs to the potassium channel KCNN family. KCa3.1/KCNN4 subfamily. In terms of assembly, homodimer. Homotetramer. Heterotetramer of potassium channel proteins. Interacts with MTMR6; this interaction leads to selective dephosphorylation of PI(3)P in a lipid microdomain adjacent to KCNN4, resulting in a decrease of intermediate conductance calcium-activated potassium channel activity. Interacts (via the C-tail domain) with CALM1; the calmodulin binding is constitutive, does not require calcium and mediates calcium-dependent gating and four calmodulin molecules bind to one channel tetramer. Post-translationally, phosphorylation at His-358 by NDKB activates the intermediate conductance calcium-activated potassium channel activity, and conversely it's dephosphorylation by PHPT1 inhibits this activity. In terms of tissue distribution, widely expressed in non-excitable tissues.

It is found in the cell membrane. Its subcellular location is the cell projection. The protein resides in the ruffle membrane. It carries out the reaction K(+)(in) = K(+)(out). With respect to regulation, the channel is inhibited by clotrimazole and charybdotoxin but is insensitive to apamin. In terms of biological role, intermediate conductance calcium-activated potassium channel that mediates the voltage-independent transmembrane transfer of potassium across the cell membrane through a constitutive interaction with calmodulin which binds the intracellular calcium allowing its opening. The current is characterized by a voltage-independent activation, an intracellular calcium concentration increase-dependent activation and a single-channel conductance of about 25 picosiemens. Also presents an inwardly rectifying current, thus reducing its already small outward conductance of potassium ions, which is particularly the case when the membrane potential displays positive values, above + 20 mV. Controls calcium influx during vascular contractility by being responsible of membrane hyperpolarization induced by vasoactive factors in proliferative vascular smooth muscle cell types. Following calcium influx, the consecutive activation of KCNN4 channel leads to a hyperpolarization of the cell membrane potential and hence an increase of the electrical driving force for further calcium influx promoting sustained calcium entry in response to stimulation with chemotactic peptides. Required for maximal calcium influx and proliferation during the reactivation of naive T-cells. Plays a role in the late stages of EGF-induced macropinocytosis through activation by PI(3)P. The polypeptide is Intermediate conductance calcium-activated potassium channel protein 4 (Homo sapiens (Human)).